The sequence spans 135 residues: Ribonuclease VapC5 (135 aa).

One can recognise a PINc domain in the interval 9–130; that stretch reads VLDTSVFIAT…FAALDGAASV (122 aa). Asp-11 and Asp-100 together coordinate Mg(2+).

The protein belongs to the PINc/VapC protein family. Forms a complex with VapB5. Requires Mg(2+) as cofactor.

It is found in the secreted. Functionally, probable toxic component of a type II toxin-antitoxin (TA) system. The cognate antitoxin is VapB5. Has limited RNase activity on substrates; activity is seen with a VapC5-VapB5 complex. The chain is Ribonuclease VapC5 from Mycobacterium tuberculosis (strain ATCC 25618 / H37Rv).